Reading from the N-terminus, the 549-residue chain is Glucose-6-phosphate isomerase (549 aa).

Residue glutamate 354 is the Proton donor of the active site. Catalysis depends on residues histidine 385 and lysine 513.

It belongs to the GPI family.

It is found in the cytoplasm. The enzyme catalyses alpha-D-glucose 6-phosphate = beta-D-fructose 6-phosphate. The protein operates within carbohydrate biosynthesis; gluconeogenesis. It functions in the pathway carbohydrate degradation; glycolysis; D-glyceraldehyde 3-phosphate and glycerone phosphate from D-glucose: step 2/4. Its function is as follows. Catalyzes the reversible isomerization of glucose-6-phosphate to fructose-6-phosphate. The polypeptide is Glucose-6-phosphate isomerase (Nitrosococcus oceani (strain ATCC 19707 / BCRC 17464 / JCM 30415 / NCIMB 11848 / C-107)).